The following is a 176-amino-acid chain: Bifunctional protein PyrR (176 aa).

The PRPP-binding motif lies at Val-93–Thr-105.

Belongs to the purine/pyrimidine phosphoribosyltransferase family. PyrR subfamily. As to quaternary structure, homodimer and homohexamer; in equilibrium.

It carries out the reaction UMP + diphosphate = 5-phospho-alpha-D-ribose 1-diphosphate + uracil. Functionally, regulates transcriptional attenuation of the pyrimidine nucleotide (pyr) operon by binding in a uridine-dependent manner to specific sites on pyr mRNA. This disrupts an antiterminator hairpin in the RNA and favors formation of a downstream transcription terminator, leading to a reduced expression of downstream genes. In terms of biological role, also displays a weak uracil phosphoribosyltransferase activity which is not physiologically significant. The chain is Bifunctional protein PyrR from Streptococcus mutans serotype c (strain ATCC 700610 / UA159).